The following is a 132-amino-acid chain: Urease subunit beta (132 aa).

It belongs to the urease beta subunit family. Heterotrimer of UreA (gamma), UreB (beta) and UreC (alpha) subunits. Three heterotrimers associate to form the active enzyme.

It localises to the cytoplasm. It carries out the reaction urea + 2 H2O + H(+) = hydrogencarbonate + 2 NH4(+). It functions in the pathway nitrogen metabolism; urea degradation; CO(2) and NH(3) from urea (urease route): step 1/1. In Natronomonas pharaonis (strain ATCC 35678 / DSM 2160 / CIP 103997 / JCM 8858 / NBRC 14720 / NCIMB 2260 / Gabara) (Halobacterium pharaonis), this protein is Urease subunit beta.